A 312-amino-acid polypeptide reads, in one-letter code: MKKIFLAGLAAGFQTTWTLGKVIFPVTLLVTLLQHTPVMDWLVRLITPVMGLFGLSGEAAIPLVLGNMLNLYAGIAGILTLDLSVKEVFILAVMLSFCHNLIIESTVAAKVGIRIGVILAVRIGLAAVSAIVINLIWHGGKETAQYGFIAAKSAAPDSWLGMLAEALTKAGLGVLQLAAIVIPLMIIIQFLRDLGWLYRFSRWLSPFTQLLGMNKNTSMTMVTGLTIGLAYGAGVMIKAVEDDGVSKRDMTLAFIFLVACHAVVEDTLVFIPLGIPVWPLLLIRVTTAVLLTMAIAHTWKKWKPSAVGKEAI.

Transmembrane regions (helical) follow at residues 4 to 24 (IFLA…KVIF), 45 to 65 (LITP…PLVL), 75 to 95 (IAGI…AVML), 117 to 137 (VILA…NLIW), 171 to 191 (GLGV…IQFL), 217 to 237 (TSMT…GVMI), 253 to 275 (AFIF…PLGI), and 280 to 299 (LLLI…AHTW).

The protein localises to the cell membrane. This is an uncharacterized protein from Bacillus subtilis (strain 168).